Consider the following 316-residue polypeptide: Mitochondrial GTPase 1 (316 aa).

The CP-type G domain occupies 28 to 203 (MKQMQQKLKQ…LLDTPGILKP (176 aa)). GTP is bound by residues 73–76 (NKKD), 147–152 (NVGKSS), and G199.

This sequence belongs to the TRAFAC class YlqF/YawG GTPase family. MTG1 subfamily.

It is found in the mitochondrion inner membrane. Functionally, plays a role in the regulation of the mitochondrial ribosome assembly and of translational activity. Displays mitochondrial GTPase activity. The chain is Mitochondrial GTPase 1 from Aedes aegypti (Yellowfever mosquito).